A 239-amino-acid polypeptide reads, in one-letter code: Fatty acid metabolism regulator protein (239 aa).

In terms of domain architecture, HTH gntR-type spans 6–74 (QSPAGFAEEY…HGKPTKVNNF (69 aa)). Residues 34 to 53 (ERELSELIGVTRTTLREVLQ) constitute a DNA-binding region (H-T-H motif).

As to quaternary structure, homodimer.

The protein localises to the cytoplasm. Multifunctional regulator of fatty acid metabolism. This is Fatty acid metabolism regulator protein from Serratia proteamaculans (strain 568).